The primary structure comprises 49 residues: MARYRCCRSQSRSRCRRRRRRCRRRRRRCCRRRRRVCCRRYTVRCRRRR.

Belongs to the protamine P1 family. In terms of tissue distribution, testis.

Its subcellular location is the nucleus. It localises to the chromosome. Its function is as follows. Protamines substitute for histones in the chromatin of sperm during the haploid phase of spermatogenesis. They compact sperm DNA into a highly condensed, stable and inactive complex. The sequence is that of Sperm protamine P1 (PRM1) from Pteropus hypomelanus (Island flying fox).